The chain runs to 474 residues: MSNKISETLTFECETGNYHTFCPISCVAWLYQKIEDSFFLVVGTKTCGYFLQNALGVMIFAEPRYAMAELEEGDISAQLNDYKELKRLCLQIKKDRNPSVIIWIGTCTTEIIKMDLEGMAPKLENELGIPIVVARANGLDYAFTQGEDTVLAAMAHRCPEQNTLLDNKKVIQQDSTIQDFFSFLSLEKKEETRNNSSIKSKKHPPLVLFGSLPSTVASQLSSELKRQSVQVSGWLPAQRYTDLPSLGDQVYVCGVNPFLSRTATTLMRRRKCKLIGAPFPIGPDGTRAWIEKICSVFNIKTKDLEQREQQIWENLKDYLDLVRGKSVFFMGDNLLEISLARFLIRCGMIVYEIGIPYLDKRYQAAELLFLQNTCKSMGIPMPRIVEKPDNYNQIQRMRELQPDLAITGMAHANPLEARGINTKWSVEFTFAQIHGFTNARDVLELVTRPLRRNNNLENLGWNDLTKKEKQIKFN.

[4Fe-4S] cluster is bound by residues Cys-22, Cys-47, and Cys-107.

Belongs to the BchN/ChlN family. Protochlorophyllide reductase is composed of three subunits; ChlL, ChlN and ChlB. Forms a heterotetramer of two ChlB and two ChlN subunits. [4Fe-4S] cluster is required as a cofactor.

It localises to the plastid. The protein resides in the chloroplast. The enzyme catalyses chlorophyllide a + oxidized 2[4Fe-4S]-[ferredoxin] + 2 ADP + 2 phosphate = protochlorophyllide a + reduced 2[4Fe-4S]-[ferredoxin] + 2 ATP + 2 H2O. The protein operates within porphyrin-containing compound metabolism; chlorophyll biosynthesis (light-independent). In terms of biological role, component of the dark-operative protochlorophyllide reductase (DPOR) that uses Mg-ATP and reduced ferredoxin to reduce ring D of protochlorophyllide (Pchlide) to form chlorophyllide a (Chlide). This reaction is light-independent. The NB-protein (ChlN-ChlB) is the catalytic component of the complex. This is Light-independent protochlorophyllide reductase subunit N from Physcomitrium patens (Spreading-leaved earth moss).